A 325-amino-acid polypeptide reads, in one-letter code: Phospho-N-acetylmuramoyl-pentapeptide-transferase (325 aa).

Helical transmembrane passes span 9-29, 53-73, 77-97, 112-132, 154-174, 182-202, 204-224, 231-251, 257-277, and 305-325; these read ALLVSFFVALGGGRVLIPWLL, TMGGIIFLLSLVVTVVVFQAF, TLLLLITTLLFGLLGFLDDYL, KLLGQVIFSLVLTFGAVAFLG, LGNVFFFAATIFIMVGFANAV, GLCSSVTLIVMSFFAMTSLAL, EKGLFIFALALMGGLVGFLVY, VFMGDTGSLALGAAVAGFAVL, FLLLVGLIYVVETLSVIIQVI, and KIVLVFSLVTLIMVLISGYGL.

This sequence belongs to the glycosyltransferase 4 family. MraY subfamily. The cofactor is Mg(2+).

The protein resides in the cell membrane. It catalyses the reaction UDP-N-acetyl-alpha-D-muramoyl-L-alanyl-gamma-D-glutamyl-meso-2,6-diaminopimeloyl-D-alanyl-D-alanine + di-trans,octa-cis-undecaprenyl phosphate = di-trans,octa-cis-undecaprenyl diphospho-N-acetyl-alpha-D-muramoyl-L-alanyl-D-glutamyl-meso-2,6-diaminopimeloyl-D-alanyl-D-alanine + UMP. Its pathway is cell wall biogenesis; peptidoglycan biosynthesis. Catalyzes the initial step of the lipid cycle reactions in the biosynthesis of the cell wall peptidoglycan: transfers peptidoglycan precursor phospho-MurNAc-pentapeptide from UDP-MurNAc-pentapeptide onto the lipid carrier undecaprenyl phosphate, yielding undecaprenyl-pyrophosphoryl-MurNAc-pentapeptide, known as lipid I. In Carboxydothermus hydrogenoformans (strain ATCC BAA-161 / DSM 6008 / Z-2901), this protein is Phospho-N-acetylmuramoyl-pentapeptide-transferase.